Reading from the N-terminus, the 160-residue chain is Sec-independent protein translocase protein TatB (160 aa).

A helical membrane pass occupies residues Met1 to Gly21. Residues His118–Val160 are disordered. Composition is skewed to basic and acidic residues over residues Ala128–Lys140 and Asn149–Val160.

The protein belongs to the TatB family. The Tat system comprises two distinct complexes: a TatABC complex, containing multiple copies of TatA, TatB and TatC subunits, and a separate TatA complex, containing only TatA subunits. Substrates initially bind to the TatABC complex, which probably triggers association of the separate TatA complex to form the active translocon.

The protein resides in the cell inner membrane. Its function is as follows. Part of the twin-arginine translocation (Tat) system that transports large folded proteins containing a characteristic twin-arginine motif in their signal peptide across membranes. Together with TatC, TatB is part of a receptor directly interacting with Tat signal peptides. TatB may form an oligomeric binding site that transiently accommodates folded Tat precursor proteins before their translocation. This Helicobacter pylori (strain J99 / ATCC 700824) (Campylobacter pylori J99) protein is Sec-independent protein translocase protein TatB.